Consider the following 648-residue polypeptide: Nucleoside triphosphatase I (648 aa).

The Helicase ATP-binding domain maps to 48–212; the sequence is FIGLKNLNSM…NNLIGLLRPN (165 aa). 61–68 contributes to the ATP binding site; that stretch reads WDTGMGKT. The DEXH box motif lies at 150-153; the sequence is DEVH. The region spanning 378 to 541 is the Helicase C-terminal domain; it reads YIETCKIILN…KINVIFDLLK (164 aa). Residues 467-533 form a binding to the cap-specific mRNA (nucleoside-2'-O-)-methyltransferase region; the sequence is DIIILDMPWN…DIIKDKQGKI (67 aa).

Belongs to the helicase family. NPH I subfamily. As to quaternary structure, monomer. Interacts (via C-terminus) with RAP94 (via N-terminus). Interacts with the cap-specific mRNA (nucleoside-2'-O-)-methyltransferase.

Its subcellular location is the virion. It carries out the reaction a ribonucleoside 5'-triphosphate + H2O = a ribonucleoside 5'-diphosphate + phosphate + H(+). Functionally, DNA-dependent ATPase required for providing the needed energy to achieve the termination of early transcripts. Acts in concert with the RAP94 subunit of the virion RNA polymerase and the capping enzyme/VTF to catalyze release of UUUUUNU-containing nascent RNA from the elongation complex. NPH-I must bind ssDNA in order to exhibit ATPase activity. In Amsacta (AmEPV), this protein is Nucleoside triphosphatase I (NPH1).